A 123-amino-acid polypeptide reads, in one-letter code: MSLTNEQIIEAIASKTVTEIVELIAAMEEKFGVSAAAAVAAAPAAGGAAAAEEKTEFDVVLKSAGANKVAVIKAVRGATGLGLKEAKDLVESAPANLKEGVSKEEAEALKKELEEAGAEVEVK.

This sequence belongs to the bacterial ribosomal protein bL12 family. As to quaternary structure, homodimer. Part of the ribosomal stalk of the 50S ribosomal subunit. Forms a multimeric L10(L12)X complex, where L10 forms an elongated spine to which 2 to 4 L12 dimers bind in a sequential fashion. Binds GTP-bound translation factors.

Forms part of the ribosomal stalk which helps the ribosome interact with GTP-bound translation factors. Is thus essential for accurate translation. The polypeptide is Large ribosomal subunit protein bL12 (Haemophilus influenzae (strain 86-028NP)).